Consider the following 72-residue polypeptide: Small ribosomal subunit protein bS18 (72 aa).

It belongs to the bacterial ribosomal protein bS18 family. In terms of assembly, part of the 30S ribosomal subunit. Forms a tight heterodimer with protein bS6.

Functionally, binds as a heterodimer with protein bS6 to the central domain of the 16S rRNA, where it helps stabilize the platform of the 30S subunit. The sequence is that of Small ribosomal subunit protein bS18 from Francisella philomiragia subsp. philomiragia (strain ATCC 25017 / CCUG 19701 / FSC 153 / O#319-036).